A 364-amino-acid chain; its full sequence is Alanine racemase (364 aa).

The active-site Proton acceptor; specific for D-alanine is lysine 34. Lysine 34 carries the post-translational modification N6-(pyridoxal phosphate)lysine. Substrate is bound at residue arginine 129. Tyrosine 259 acts as the Proton acceptor; specific for L-alanine in catalysis. Methionine 307 contributes to the substrate binding site.

It belongs to the alanine racemase family. Pyridoxal 5'-phosphate is required as a cofactor.

It carries out the reaction L-alanine = D-alanine. It participates in amino-acid biosynthesis; D-alanine biosynthesis; D-alanine from L-alanine: step 1/1. Catalyzes the interconversion of L-alanine and D-alanine. May also act on other amino acids. The chain is Alanine racemase (alr) from Coxiella burnetii (strain RSA 493 / Nine Mile phase I).